The following is a 487-amino-acid chain: Glutamyl-tRNA(Gln) amidotransferase subunit A (487 aa).

Active-site charge relay system residues include Lys80 and Ser155. Residue Ser179 is the Acyl-ester intermediate of the active site.

Belongs to the amidase family. GatA subfamily. As to quaternary structure, heterotrimer of A, B and C subunits.

The catalysed reaction is L-glutamyl-tRNA(Gln) + L-glutamine + ATP + H2O = L-glutaminyl-tRNA(Gln) + L-glutamate + ADP + phosphate + H(+). Allows the formation of correctly charged Gln-tRNA(Gln) through the transamidation of misacylated Glu-tRNA(Gln) in organisms which lack glutaminyl-tRNA synthetase. The reaction takes place in the presence of glutamine and ATP through an activated gamma-phospho-Glu-tRNA(Gln). The sequence is that of Glutamyl-tRNA(Gln) amidotransferase subunit A from Leptospira interrogans serogroup Icterohaemorrhagiae serovar Lai (strain 56601).